Here is a 139-residue protein sequence, read N- to C-terminus: D-ribose pyranase (139 aa).

The active-site Proton donor is the His-20. Residues Asp-28, His-106, and 128–130 contribute to the substrate site; that span reads YAN.

Belongs to the RbsD / FucU family. RbsD subfamily. Homodecamer.

The protein resides in the cytoplasm. It catalyses the reaction beta-D-ribopyranose = beta-D-ribofuranose. It functions in the pathway carbohydrate metabolism; D-ribose degradation; D-ribose 5-phosphate from beta-D-ribopyranose: step 1/2. Catalyzes the interconversion of beta-pyran and beta-furan forms of D-ribose. The chain is D-ribose pyranase from Actinobacillus pleuropneumoniae serotype 7 (strain AP76).